A 315-amino-acid polypeptide reads, in one-letter code: Acetaldehyde dehydrogenase 2 (315 aa).

15–18 serves as a coordination point for NAD(+); that stretch reads SGNI. Cys-135 (acyl-thioester intermediate) is an active-site residue. Residues 166-174 and Asn-293 contribute to the NAD(+) site; that span reads SAGPGTRAN.

It belongs to the acetaldehyde dehydrogenase family.

The enzyme catalyses acetaldehyde + NAD(+) + CoA = acetyl-CoA + NADH + H(+). The protein is Acetaldehyde dehydrogenase 2 of Paraburkholderia phymatum (strain DSM 17167 / CIP 108236 / LMG 21445 / STM815) (Burkholderia phymatum).